An 873-amino-acid polypeptide reads, in one-letter code: Tetratricopeptide repeat protein 16 (873 aa).

The tract at residues 1 to 20 is disordered; the sequence is MTDSDEDALKVDQGPSRDIP. 8 TPR repeats span residues 61-94, 96-128, 136-169, 251-284, 285-318, 331-364, 365-398, and 406-439; these read VREY…DPQL, DFYA…QQDN, TFVL…QPEK, AQQA…NPLD, PSLF…VTED, LLTY…EQQE, KGLY…SPQD, and GLLQ…NPQK. Disordered stretches follow at residues 553–626 and 639–873; these read EELK…TSET and SATA…YEAV. Acidic residues predominate over residues 571–582; the sequence is GEAEAPEEEEEK. Over residues 583–593 the composition is skewed to basic and acidic residues; it reads EKEKKEEKKSE. Polar residues-rich tracts occupy residues 600-626, 639-663, and 675-693; these read ASLS…TSET, SATA…NNRE, and TQGQ…SQRR. Over residues 694–708 the composition is skewed to basic residues; it reads NSSKTKATIHKRNSS. Over residues 709–750 the composition is skewed to polar residues; that stretch reads KTKATQSQRRNSSKTRATQGQGQSSSKTEATQGQRQSSSEIE. A compositionally biased stretch (basic residues) spans 763-784; it reads KTTRSPRQRPRKVKAARGRSWR. 2 stretches are compositionally biased toward polar residues: residues 800 to 828 and 836 to 860; these read RSST…GQRS and GKSQ…SLSK.

This chain is Tetratricopeptide repeat protein 16 (TTC16), found in Homo sapiens (Human).